Reading from the N-terminus, the 293-residue chain is Triplex capsid protein 2 (293 aa).

The protein belongs to the herpesviridae TRX2 protein family. As to quaternary structure, interacts with TRX1 and major capisd protein/MCP.

The protein localises to the virion. It localises to the host nucleus. Functionally, structural component of the T=16 icosahedral capsid. The capsid is composed of pentamers and hexamers of major capsid protein/MCP, which are linked together by heterotrimers called triplexes. These triplexes are formed by a single molecule of triplex protein 1/TRX1 and two copies of triplex protein 2/TRX2. Additionally, TRX1 is required for efficient transport of TRX2 to the nucleus, which is the site of capsid assembly. This is Triplex capsid protein 2 from Homo sapiens (Human).